The following is a 368-amino-acid chain: Dihydroorotate dehydrogenase (quinone) (368 aa).

Residues 67 to 71 (AGFDK) and Thr91 contribute to the FMN site. Lys71 contacts substrate. 116-120 (NRMGF) contacts substrate. FMN contacts are provided by Asn146 and Asn179. Residue Asn179 coordinates substrate. Ser182 acts as the Nucleophile in catalysis. Asn184 contributes to the substrate binding site. Positions 222 and 250 each coordinate FMN. 251–252 (NT) serves as a coordination point for substrate. FMN-binding positions include Gly276, Gly305, and 326–327 (YS).

The protein belongs to the dihydroorotate dehydrogenase family. Type 2 subfamily. As to quaternary structure, monomer. The cofactor is FMN.

It is found in the cell membrane. It carries out the reaction (S)-dihydroorotate + a quinone = orotate + a quinol. The protein operates within pyrimidine metabolism; UMP biosynthesis via de novo pathway; orotate from (S)-dihydroorotate (quinone route): step 1/1. Functionally, catalyzes the conversion of dihydroorotate to orotate with quinone as electron acceptor. The sequence is that of Dihydroorotate dehydrogenase (quinone) from Streptomyces coelicolor (strain ATCC BAA-471 / A3(2) / M145).